Here is a 107-residue protein sequence, read N- to C-terminus: Nucleoid-associated protein Mmar10_0436 (107 aa).

Belongs to the YbaB/EbfC family. Homodimer.

Its subcellular location is the cytoplasm. The protein resides in the nucleoid. Binds to DNA and alters its conformation. May be involved in regulation of gene expression, nucleoid organization and DNA protection. The polypeptide is Nucleoid-associated protein Mmar10_0436 (Maricaulis maris (strain MCS10) (Caulobacter maris)).